The primary structure comprises 387 residues: UDP-Gal:alpha-D-GlcNAc-diphosphoundecaprenol alpha-1,3-galactosyltransferase (387 aa).

It belongs to the glycosyltransferase group 1 family. Glycosyltransferase 4 subfamily. Requires Mg(2+) as cofactor. Mn(2+) is required as a cofactor. It depends on Fe(2+) as a cofactor.

It catalyses the reaction N-acetyl-alpha-D-glucosaminyl-di-trans,octa-cis-undecaprenyl diphosphate + UDP-alpha-D-galactose = alpha-D-Gal-(1-&gt;3)-alpha-D-GlcNAc-di-trans,octa-cis-undecaprenyl diphosphate + UDP + H(+). It participates in bacterial outer membrane biogenesis; LPS O-antigen biosynthesis. Involved in the biosynthesis of the lipopolysaccharide (LPS) O-antigen region. Catalyzes the transfer of galactose from UDP-galactose to GlcNAc-undecaprenyl diphosphate via an alpha1,3-linkage. Has strict substrate specificity. The chain is UDP-Gal:alpha-D-GlcNAc-diphosphoundecaprenol alpha-1,3-galactosyltransferase from Escherichia coli.